The sequence spans 265 residues: Octanoyltransferase (265 aa).

In terms of domain architecture, BPL/LPL catalytic spans 35 to 254; the sequence is DEVPDTVLLL…HLRDVLENAE (220 aa). Substrate contacts are provided by residues 73–80, 184–186, and 197–199; these read RGGKITWH, AIG, and GFA. Cys215 functions as the Acyl-thioester intermediate in the catalytic mechanism.

This sequence belongs to the LipB family.

It localises to the cytoplasm. It catalyses the reaction octanoyl-[ACP] + L-lysyl-[protein] = N(6)-octanoyl-L-lysyl-[protein] + holo-[ACP] + H(+). It functions in the pathway protein modification; protein lipoylation via endogenous pathway; protein N(6)-(lipoyl)lysine from octanoyl-[acyl-carrier-protein]: step 1/2. In terms of biological role, catalyzes the transfer of endogenously produced octanoic acid from octanoyl-acyl-carrier-protein onto the lipoyl domains of lipoate-dependent enzymes. Lipoyl-ACP can also act as a substrate although octanoyl-ACP is likely to be the physiological substrate. This Streptomyces coelicolor (strain ATCC BAA-471 / A3(2) / M145) protein is Octanoyltransferase.